The chain runs to 342 residues: Methionyl-tRNA formyltransferase (342 aa).

(6S)-5,6,7,8-tetrahydrofolate is bound at residue 110–113; it reads SLLP.

It belongs to the Fmt family.

The enzyme catalyses L-methionyl-tRNA(fMet) + (6R)-10-formyltetrahydrofolate = N-formyl-L-methionyl-tRNA(fMet) + (6S)-5,6,7,8-tetrahydrofolate + H(+). Attaches a formyl group to the free amino group of methionyl-tRNA(fMet). The formyl group appears to play a dual role in the initiator identity of N-formylmethionyl-tRNA by promoting its recognition by IF2 and preventing the misappropriation of this tRNA by the elongation apparatus. The protein is Methionyl-tRNA formyltransferase of Synechococcus sp. (strain CC9311).